Here is a 150-residue protein sequence, read N- to C-terminus: Cytochrome c-type biogenesis protein CcmE (150 aa).

Topologically, residues 1–7 (MTRKQKR) are cytoplasmic. A helical; Signal-anchor for type II membrane protein transmembrane segment spans residues 8–28 (LAIIGGGVGFLTAAVLLVMFA). The Periplasmic portion of the chain corresponds to 29–150 (FSQAVAYFYV…VTLGGKENIQ (122 aa)). His-123 and Tyr-127 together coordinate heme.

This sequence belongs to the CcmE/CycJ family.

It localises to the cell inner membrane. Its function is as follows. Heme chaperone required for the biogenesis of c-type cytochromes. Transiently binds heme delivered by CcmC and transfers the heme to apo-cytochromes in a process facilitated by CcmF and CcmH. The chain is Cytochrome c-type biogenesis protein CcmE from Sinorhizobium fredii (strain NBRC 101917 / NGR234).